The sequence spans 351 residues: Holliday junction branch migration complex subunit RuvB (351 aa).

A large ATPase domain (RuvB-L) region spans residues 1–182; sequence MNDRLITPDA…FGIVQRLEYY (182 aa). Residues Ile21, Arg22, Gly63, Lys66, Thr67, Thr68, 129-131, Arg172, Tyr182, and Arg219 each bind ATP; that span reads EDF. Thr67 lines the Mg(2+) pocket. Residues 183-253 form a small ATPAse domain (RuvB-S) region; that stretch reads NVADLSGIVK…VAHAAMELLN (71 aa). The segment at 256–351 is head domain (RuvB-H); sequence RNGFDEQDRR…QDAPPVGRER (96 aa). The DNA site is built by Arg292, Arg311, and Arg316. Positions 328-351 are disordered; it reads LNPPRQPDTSPDLFQDAPPVGRER.

It belongs to the RuvB family. In terms of assembly, homohexamer. Forms an RuvA(8)-RuvB(12)-Holliday junction (HJ) complex. HJ DNA is sandwiched between 2 RuvA tetramers; dsDNA enters through RuvA and exits via RuvB. An RuvB hexamer assembles on each DNA strand where it exits the tetramer. Each RuvB hexamer is contacted by two RuvA subunits (via domain III) on 2 adjacent RuvB subunits; this complex drives branch migration. In the full resolvosome a probable DNA-RuvA(4)-RuvB(12)-RuvC(2) complex forms which resolves the HJ.

It is found in the cytoplasm. It catalyses the reaction ATP + H2O = ADP + phosphate + H(+). Its function is as follows. The RuvA-RuvB-RuvC complex processes Holliday junction (HJ) DNA during genetic recombination and DNA repair, while the RuvA-RuvB complex plays an important role in the rescue of blocked DNA replication forks via replication fork reversal (RFR). RuvA specifically binds to HJ cruciform DNA, conferring on it an open structure. The RuvB hexamer acts as an ATP-dependent pump, pulling dsDNA into and through the RuvAB complex. RuvB forms 2 homohexamers on either side of HJ DNA bound by 1 or 2 RuvA tetramers; 4 subunits per hexamer contact DNA at a time. Coordinated motions by a converter formed by DNA-disengaged RuvB subunits stimulates ATP hydrolysis and nucleotide exchange. Immobilization of the converter enables RuvB to convert the ATP-contained energy into a lever motion, pulling 2 nucleotides of DNA out of the RuvA tetramer per ATP hydrolyzed, thus driving DNA branch migration. The RuvB motors rotate together with the DNA substrate, which together with the progressing nucleotide cycle form the mechanistic basis for DNA recombination by continuous HJ branch migration. Branch migration allows RuvC to scan DNA until it finds its consensus sequence, where it cleaves and resolves cruciform DNA. The chain is Holliday junction branch migration complex subunit RuvB from Alkalilimnicola ehrlichii (strain ATCC BAA-1101 / DSM 17681 / MLHE-1).